We begin with the raw amino-acid sequence, 501 residues long: Cytochrome P450 monooxygeanse terP (501 aa).

The chain crosses the membrane as a helical span at residues 2-22; it reads PSLLLSLLLLQVPIICAWLLV. Residue cysteine 441 participates in heme binding.

This sequence belongs to the cytochrome P450 family. Heme is required as a cofactor.

Its subcellular location is the membrane. Its pathway is secondary metabolite biosynthesis. In terms of biological role, cytochrome P450 monooxygeanse; part of the gene cluster that mediates the biosynthesis of terpendoles, indole-diterpene (IDT) mycotoxins including terpendole I, terpendole K, terpendole C, as well as the kinesin Eg5 inhibitor terpendole E. TerP has dual activity and is able to convert terpendole E to 13-desoxyterpendole I and paspaline to 13-desoxypaxilline. Terpendoles biosynthesis begins with the synthesis of geranylgeranyl diphosphate (GGPP) by a yet unidentified GGPP synthase. Condensation of indole-3-glycerol phosphate with GGPP by the prenyltransferase terC then forms 3-geranylgeranylindole (3-GGI), followed by epoxidation and cyclization of this intermediate (by the FAD-dependent monooxygeanse terM and the terpene cyclase terB) to form paspaline. The cytochrome monooxygenase terQ then hydroxylates paspalline at C-11 to yield terpendole E. The cytochrome monooxygenase terP converts terpendole E to 13-desoxyterpendole I, and terQ converts 13-desoxyterpendole I into terpendole I. TerF and terK are required for conversion of terpendole I to terpendole C which is further converted to terpendole K. The protein is Cytochrome P450 monooxygeanse terP of Tolypocladium album (Soil fungus).